The primary structure comprises 468 residues: Adenosylhomocysteinase (468 aa).

Substrate contacts are provided by threonine 57, aspartate 132, and glutamate 194. 195-197 (TTT) contributes to the NAD(+) binding site. Substrate is bound by residues lysine 224 and aspartate 228. Residues asparagine 229, 258–263 (GFGDVG), glutamate 281, asparagine 316, 337–339 (IGH), and asparagine 382 contribute to the NAD(+) site.

It belongs to the adenosylhomocysteinase family. NAD(+) serves as cofactor.

The protein resides in the cytoplasm. It catalyses the reaction S-adenosyl-L-homocysteine + H2O = L-homocysteine + adenosine. It functions in the pathway amino-acid biosynthesis; L-homocysteine biosynthesis; L-homocysteine from S-adenosyl-L-homocysteine: step 1/1. Functionally, may play a key role in the regulation of the intracellular concentration of adenosylhomocysteine. In Methylorubrum extorquens (strain CM4 / NCIMB 13688) (Methylobacterium extorquens), this protein is Adenosylhomocysteinase.